A 311-amino-acid polypeptide reads, in one-letter code: Probable manganese-dependent inorganic pyrophosphatase (311 aa).

Mn(2+) contacts are provided by His9, Asp13, Asp15, Asp77, His99, and Asp151.

This sequence belongs to the PPase class C family. Requires Mn(2+) as cofactor.

It localises to the cytoplasm. The catalysed reaction is diphosphate + H2O = 2 phosphate + H(+). The protein is Probable manganese-dependent inorganic pyrophosphatase of Streptococcus equi subsp. zooepidemicus (strain H70).